Consider the following 437-residue polypeptide: MLLGDLRRTHYSKDIEPEMDGDEVTVMGWVHEIRDLGGIIFVLLRDRDGLIQITAPSKKIEKDLFKSIRKLKKESVVAFGGTVQESGKAPGGFEIIPSFLKVLNISKQPLPLDPTEKVKAEIDTRLDARFLDLRKPSVSAIFKIKSRMLHSVRVFLEEQGFLEINTPKLVASATEGGTELFPITYFEREAFLGQSPQLYKQIMMSTGLDRVYEIAPIFRAEEHDTLRHLNEVISIDIEASFVDHEDVMKILENLVVRVIEDVNEHCTDALETLGRTLEVPETPFERLEYDEAVEMVNSKGVPMKHGEDLPRAAEKALGEIMDGYYFITSWPTAIKPFYVMPDEDDPERSHAFDLMYRDLEISSGAMRVHQHDLLVEKIKRQGLNPDSFESYLSAFEYGMPPHAGWGLGAERFNMTLTGLKNIRETVLFPRDRRRLTP.

Residue Glu-175 participates in L-aspartate binding. An aspartate region spans residues Gln-197–Lys-200. Arg-219 contacts L-aspartate. ATP contacts are provided by residues Arg-219–Glu-221, Arg-227–Leu-229, and Glu-360. Mg(2+) contacts are provided by Glu-360 and Ser-363. Ser-363 and Arg-367 together coordinate L-aspartate. Gly-408 to Arg-411 lines the ATP pocket.

The protein belongs to the class-II aminoacyl-tRNA synthetase family. Type 2 subfamily. In terms of assembly, homodimer. The cofactor is Mg(2+).

It is found in the cytoplasm. It carries out the reaction tRNA(Asx) + L-aspartate + ATP = L-aspartyl-tRNA(Asx) + AMP + diphosphate. In terms of biological role, aspartyl-tRNA synthetase with relaxed tRNA specificity since it is able to aspartylate not only its cognate tRNA(Asp) but also tRNA(Asn). Reaction proceeds in two steps: L-aspartate is first activated by ATP to form Asp-AMP and then transferred to the acceptor end of tRNA(Asp/Asn). The chain is Aspartate--tRNA(Asp/Asn) ligase from Methanothermobacter thermautotrophicus (strain ATCC 29096 / DSM 1053 / JCM 10044 / NBRC 100330 / Delta H) (Methanobacterium thermoautotrophicum).